Here is a 345-residue protein sequence, read N- to C-terminus: Galacturonate transporter (345 aa).

The first 32 residues, 1 to 32 (MFKIKGLRWYMIGLVTIGTVLGYLTRNAIAAA), serve as a signal peptide directing secretion. Transmembrane regions (helical) follow at residues 49 to 69 (YIIAAYSACYTIMQPVAGYVL), 76 to 96 (VGYAMFAILWALFCAGTALAN), 100 to 120 (GLAVARGAVGMAEAAMIPAGL), 139 to 159 (FNVGSSIGGMLAPPLVVWAIM), 165 to 185 (MAFLITGALSLVWALCWLYFY), 237 to 257 (FLAEPAWGTFNAWIPLFMFKA), 265 to 285 (IAMFAWMPMLFADLGCILGGY), and 304 to 324 (LVVTLGALLMIGPGTIGLFTS).

It belongs to the major facilitator superfamily. Phthalate permease family.

It localises to the cell inner membrane. The enzyme catalyses aldehydo-D-galacturonate(out) + H(+)(out) = aldehydo-D-galacturonate(in) + H(+)(in). Its activity is regulated as follows. Inhibited by cyanide and 2,4-dinitrophenol, but not by arsenate. Functionally, transport of D-galacturonate. Cannot transport the dimer digalacturonic acid. Uptake is an active process. This chain is Galacturonate transporter, found in Dickeya chrysanthemi (Pectobacterium chrysanthemi).